The sequence spans 278 residues: Tryptophan synthase alpha chain (278 aa).

Catalysis depends on proton acceptor residues glutamate 50 and aspartate 61.

The protein belongs to the TrpA family. Tetramer of two alpha and two beta chains.

It catalyses the reaction (1S,2R)-1-C-(indol-3-yl)glycerol 3-phosphate + L-serine = D-glyceraldehyde 3-phosphate + L-tryptophan + H2O. The protein operates within amino-acid biosynthesis; L-tryptophan biosynthesis; L-tryptophan from chorismate: step 5/5. The alpha subunit is responsible for the aldol cleavage of indoleglycerol phosphate to indole and glyceraldehyde 3-phosphate. This is Tryptophan synthase alpha chain from Methylobacterium nodulans (strain LMG 21967 / CNCM I-2342 / ORS 2060).